We begin with the raw amino-acid sequence, 396 residues long: Argininosuccinate synthase (396 aa).

Residue 9 to 17 (AYSGGLDTS) participates in ATP binding. Residue Tyr85 participates in L-citrulline binding. Gly115 contributes to the ATP binding site. Thr117, Asn121, and Asp122 together coordinate L-aspartate. Asn121 is an L-citrulline binding site. 4 residues coordinate L-citrulline: Arg125, Ser173, Glu258, and Tyr270.

The protein belongs to the argininosuccinate synthase family. Type 1 subfamily. In terms of assembly, homotetramer.

It localises to the cytoplasm. It carries out the reaction L-citrulline + L-aspartate + ATP = 2-(N(omega)-L-arginino)succinate + AMP + diphosphate + H(+). It functions in the pathway amino-acid biosynthesis; L-arginine biosynthesis; L-arginine from L-ornithine and carbamoyl phosphate: step 2/3. The protein is Argininosuccinate synthase of Streptococcus agalactiae serotype Ia (strain ATCC 27591 / A909 / CDC SS700).